The sequence spans 245 residues: 3-dehydroquinate dehydratase (245 aa).

3-dehydroquinate contacts are provided by residues 35 to 37 and Arg70; that span reads EFR. Residue His132 is the Proton donor/acceptor of the active site. Catalysis depends on Lys158, which acts as the Schiff-base intermediate with substrate. Residues Arg199, Thr220, and Gln224 each coordinate 3-dehydroquinate.

It belongs to the type-I 3-dehydroquinase family. Homodimer.

It catalyses the reaction 3-dehydroquinate = 3-dehydroshikimate + H2O. It participates in metabolic intermediate biosynthesis; chorismate biosynthesis; chorismate from D-erythrose 4-phosphate and phosphoenolpyruvate: step 3/7. Involved in the third step of the chorismate pathway, which leads to the biosynthesis of aromatic amino acids. Catalyzes the cis-dehydration of 3-dehydroquinate (DHQ) and introduces the first double bond of the aromatic ring to yield 3-dehydroshikimate. In Haloquadratum walsbyi (strain DSM 16790 / HBSQ001), this protein is 3-dehydroquinate dehydratase.